A 969-amino-acid polypeptide reads, in one-letter code: Aspartic protease 5 (969 aa).

A signal peptide spans 1–22; the sequence is MEAGAMGGSSFLSFSSGPSAET. Over residues 1–45 the composition is skewed to low complexity; sequence MEAGAMGGSSFLSFSSGPSAETSPSSLSPPTSSSPSPSPQLVSDS. Disordered stretches follow at residues 1–65, 79–104, 128–149, 173–193, and 311–382; these read MEAG…SSRT, ENEAAPTISQEERRGGSMTAASAGHL, SSATSVLSLGGERGRPPSRSSS, SSSSPLSPLPHPRGAPASACG, and FLSL…DLPR. Residues 23–820 lie on the Lumenal side of the membrane; it reads SPSSLSPPTS…PEGLPLSPQQ (798 aa). Low complexity predominate over residues 311–324; the sequence is FLSLSSSPRSLASD. Residues 335–355 are compositionally biased toward basic and acidic residues; it reads QSREQRGEREGERQRPDKGEE. The Peptidase A1 domain maps to 413–758; that stretch reads YFLDILVGTP…DREQDRVGFA (346 aa). Residue Asp-431 is part of the active site. A disordered region spans residues 608–635; the sequence is PPESESTPATEALRPVAGESASRRISEK. Asp-682 is an active-site residue. The disordered stretch occupies residues 768–794; that stretch reads DQRPRGPDSGDGPKGRPTAPFTVPPLR. Basic and acidic residues predominate over residues 769–781; it reads QRPRGPDSGDGPK. The helical transmembrane segment at 821–841 threads the bilayer; the sequence is LWVAAALVVVAILIAVTVILL. Over 842–969 the chain is Cytoplasmic; it reads HTIKRPSRSS…TLLDLPLGGE (128 aa). Positions 922–969 are disordered; sequence EDDGDFFGDDSVPSAEEQETAPSLSLREESSPFSASQSTLLDLPLGGE. Over residues 952-961 the composition is skewed to polar residues; the sequence is SPFSASQSTL.

Belongs to the peptidase A1 family. May be auto-cleaved to produce a 55 kDa form.

The protein localises to the golgi apparatus membrane. Its function is as follows. In tachyzoites, plays an essential role in the export of several dense granule proteins into the host cell by cleaving the localization motif RRLxx (termed Toxoplasma export element (TEXEL)) located downstream of the N-terminal secretory signal sequence. However, can also regulate the export of proteins that lack the TEXEL motif, such as GRA24. Requires Arg at P3 and P2, and Leu at P1 in the substrate TEXEL motif and, specifically, cleaves after Leu. Cleaves GRA16; proteolytic cleavage is essential for the correct trafficking of GRA16 from the parasite into the infected host nucleus. Cleaves GRA19 and GRA20. Cleaves MYR1. Cleaves LCAT, GRA44, GRA46, GRA46, ROP35/WNG1 and ROP34/WNG2. By regulating the export of dense granule proteins into the host cell, regulates multiple processes during tachyzoite infection of host cells, including recruitment of host mitochondria to the parasitophorous vacuole (PV), formation of the nanotubular network (NTN) or intravacuolar network (IVN) which are membranous tubules that bud from the PV membrane into the vacuolar lumen and, up-regulation of host cell genes to facilitate the parasite infection and modulate the host innate immune response. At the bradyzoite stage, also involved in the formation of the cyst wall. The sequence is that of Aspartic protease 5 from Toxoplasma gondii.